The sequence spans 156 residues: Small ribosomal subunit protein uS7 (156 aa).

It belongs to the universal ribosomal protein uS7 family. Part of the 30S ribosomal subunit. Contacts proteins S9 and S11.

In terms of biological role, one of the primary rRNA binding proteins, it binds directly to 16S rRNA where it nucleates assembly of the head domain of the 30S subunit. Is located at the subunit interface close to the decoding center, probably blocks exit of the E-site tRNA. This chain is Small ribosomal subunit protein uS7, found in Idiomarina loihiensis (strain ATCC BAA-735 / DSM 15497 / L2-TR).